Consider the following 154-residue polypeptide: Interleukin-2 (154 aa).

The first 20 residues, 1 to 20 (MYRMQLLSCIALSLALVTNS), serve as a signal peptide directing secretion. The O-linked (GalNAc...) threonine glycan is linked to threonine 23. Cysteine 78 and cysteine 126 are disulfide-bonded.

Belongs to the IL-2 family.

Its subcellular location is the secreted. Cytokine produced by activated CD4-positive helper T-cells and to a lesser extend activated CD8-positive T-cells and natural killer (NK) cells that plays pivotal roles in the immune response and tolerance. Binds to a receptor complex composed of either the high-affinity trimeric IL-2R (IL2RA/CD25, IL2RB/CD122 and IL2RG/CD132) or the low-affinity dimeric IL-2R (IL2RB and IL2RG). Interaction with the receptor leads to oligomerization and conformation changes in the IL-2R subunits resulting in downstream signaling starting with phosphorylation of JAK1 and JAK3. In turn, JAK1 and JAK3 phosphorylate the receptor to form a docking site leading to the phosphorylation of several substrates including STAT5. This process leads to activation of several pathways including STAT, phosphoinositide-3-kinase/PI3K and mitogen-activated protein kinase/MAPK pathways. Functions as a T-cell growth factor and can increase NK-cell cytolytic activity as well. Promotes strong proliferation of activated B-cells and subsequently immunoglobulin production. Plays a pivotal role in regulating the adaptive immune system by controlling the survival and proliferation of regulatory T-cells, which are required for the maintenance of immune tolerance. Moreover, participates in the differentiation and homeostasis of effector T-cell subsets, including Th1, Th2, Th17 as well as memory CD8-positive T-cells. The chain is Interleukin-2 (IL2) from Cercocebus atys (Sooty mangabey).